Consider the following 649-residue polypeptide: V-type ATP synthase subunit I (649 aa).

7 helical membrane-spanning segments follow: residues 312 to 332 (FFSF…GLVF), 360 to 380 (FMIL…FFGV), 453 to 473 (FIDN…LSLG), 485 to 505 (IGWV…LQAV), 520 to 540 (GLVG…GGVI), 556 to 576 (VFSD…GAMV), and 593 to 613 (ILII…GGVI).

It belongs to the V-ATPase 116 kDa subunit family.

It is found in the cell membrane. Functionally, produces ATP from ADP in the presence of a proton gradient across the membrane. This Chlamydia trachomatis serovar D (strain ATCC VR-885 / DSM 19411 / UW-3/Cx) protein is V-type ATP synthase subunit I (atpI).